We begin with the raw amino-acid sequence, 477 residues long: Argininosuccinate synthase (477 aa).

Residues 17 to 25 (AFSGGLDTS) and Ala43 each bind ATP. Residue Tyr99 coordinates L-citrulline. The ATP site is built by Gly129 and Thr131. Thr131, Asn135, and Asp136 together coordinate L-aspartate. Position 135 (Asn135) interacts with L-citrulline. An ATP-binding site is contributed by Asp136. The L-citrulline site is built by Arg139 and Ser192. Asp194 serves as a coordination point for ATP. L-citrulline contacts are provided by Thr201, Glu203, and Glu280. Residues 450–477 (DQITENPEVQAEPEEEALDAAAMEAGTD) form a disordered region. Positions 468–477 (DAAAMEAGTD) are enriched in low complexity.

This sequence belongs to the argininosuccinate synthase family. Type 2 subfamily. As to quaternary structure, homotetramer.

Its subcellular location is the cytoplasm. It carries out the reaction L-citrulline + L-aspartate + ATP = 2-(N(omega)-L-arginino)succinate + AMP + diphosphate + H(+). It participates in amino-acid biosynthesis; L-arginine biosynthesis; L-arginine from L-ornithine and carbamoyl phosphate: step 2/3. The polypeptide is Argininosuccinate synthase (Nocardioides sp. (strain ATCC BAA-499 / JS614)).